Here is an 86-residue protein sequence, read N- to C-terminus: Elicitor peptide 5 (86 aa).

The propeptide occupies 1 to 59 (MQQERDHKRDCCKLMPQTVKAFFKCLRFRRSSSSSSDMVKARARNEEKEEPSSIETSTR). Residues 31–86 (SSSSSSDMVKARARNEEKEEPSSIETSTRSLNVMRKGIRKQPVSSGKRGGVNDYDM) form a disordered region. Residues 39 to 51 (VKARARNEEKEEP) show a composition bias toward basic and acidic residues.

Belongs to the brassicaceae elicitor peptide family.

Its function is as follows. Elicitor of plant defense. In Arabidopsis thaliana (Mouse-ear cress), this protein is Elicitor peptide 5 (PEP5).